The following is an 806-amino-acid chain: N-terminal kinase-like protein (806 aa).

Residues 14 to 314 form the Protein kinase domain; that stretch reads FELSPEPPEG…PEDFCRHKVL (301 aa). 3 HEAT repeats span residues 350–388, 389–427, and 507–545; these read IIPV…VNTQ, IFPH…LNVE, and ILPV…EDPT. Disordered regions lie at residues 586–642 and 663–806; these read RAHP…TADR and DDWS…RKLD. Residues 601 to 611 are compositionally biased toward pro residues; sequence RPVPEGNPAPA. Serine 752 carries the phosphoserine modification. The segment covering 752-762 has biased composition (acidic residues); it reads SWGEDNWEGLE. Residues 755–795 adopt a coiled-coil conformation; the sequence is EDNWEGLEAESRQVKAELARKKREERRREMEAKRAEKKTTK. 2 stretches are compositionally biased toward basic and acidic residues: residues 763-773 and 780-793; these read AESRQVKAELA and RRRE…EKKT. Residues 791–806 are interaction with COPB1; it reads KKTTKGPMKLGARKLD.

This sequence belongs to the protein kinase superfamily. In terms of assembly, homooligomer. Interacts with GORAB. Interacts with COPA, COPB1 and COPB2. Interacts with AP2B1. In terms of tissue distribution, expressed in diaphragm, quadriceps, thymus, liver, lung, spleen, kidney, heart and brain. Prominently expressed in neurons, and enriched at central nervous system synapses and neuromuscular junctions.

The protein localises to the cytoplasm. It localises to the cytoskeleton. The protein resides in the microtubule organizing center. Its subcellular location is the centrosome. It is found in the endoplasmic reticulum-Golgi intermediate compartment. The protein localises to the golgi apparatus. It localises to the cis-Golgi network. In terms of biological role, regulates COPI-mediated retrograde protein traffic at the interface between the Golgi apparatus and the endoplasmic reticulum. Involved in the maintenance of the Golgi apparatus morphology. The sequence is that of N-terminal kinase-like protein (Scyl1) from Mus musculus (Mouse).